We begin with the raw amino-acid sequence, 204 residues long: dITP/XTP pyrophosphatase (204 aa).

Position 8-13 (8-13) interacts with substrate; it reads SNNAHK. 2 residues coordinate Mg(2+): Glu41 and Asp76. Asp76 serves as the catalytic Proton acceptor. Residues Ser77, 159–162, Lys182, and 187–188 contribute to the substrate site; these read FGYD and HR.

This sequence belongs to the HAM1 NTPase family. In terms of assembly, homodimer. The cofactor is Mg(2+).

It carries out the reaction XTP + H2O = XMP + diphosphate + H(+). The enzyme catalyses dITP + H2O = dIMP + diphosphate + H(+). The catalysed reaction is ITP + H2O = IMP + diphosphate + H(+). In terms of biological role, pyrophosphatase that catalyzes the hydrolysis of nucleoside triphosphates to their monophosphate derivatives, with a high preference for the non-canonical purine nucleotides XTP (xanthosine triphosphate), dITP (deoxyinosine triphosphate) and ITP. Seems to function as a house-cleaning enzyme that removes non-canonical purine nucleotides from the nucleotide pool, thus preventing their incorporation into DNA/RNA and avoiding chromosomal lesions. The protein is dITP/XTP pyrophosphatase of Clostridium perfringens (strain 13 / Type A).